The following is a 147-amino-acid chain: Prefoldin subunit alpha (147 aa).

The protein belongs to the prefoldin alpha subunit family. Heterohexamer of two alpha and four beta subunits.

The protein localises to the cytoplasm. Functionally, molecular chaperone capable of stabilizing a range of proteins. Seems to fulfill an ATP-independent, HSP70-like function in archaeal de novo protein folding. The sequence is that of Prefoldin subunit alpha from Methanocorpusculum labreanum (strain ATCC 43576 / DSM 4855 / Z).